The sequence spans 291 residues: Early E4 34 kDa protein (291 aa).

Belongs to the adenoviridae E4 30 to 34 kDa protein family. As to quaternary structure, interacts with E1B-55k.

Its subcellular location is the host nucleus. The protein localises to the host cytoplasm. Its function is as follows. Plays a major role to prevent cellular inhibition of viral genome replication by nuclear bodies. Assembles an SCF-like E3 ubiquitin ligase complex based on the cellular proteins ELOB, ELOC, CUL5 and RBX1, in cooperation with viral E1B-55K. This viral RING-type ligase ubiquitinates cellular substrates prior to proteasomal degradation: p53/TP53, LIG4, MRE11-RAD50-NBS1 (MRN) complex, ITGA3, DAXX and BLM. The sequence is that of Early E4 34 kDa protein from Homo sapiens (Human).